Reading from the N-terminus, the 573-residue chain is Putative ferric-chelate reductase 1 (573 aa).

Residues 4-24 form a helical membrane-spanning segment; it reads VCKSPQRLLFVLVSCFGLVQS. In terms of domain architecture, Reelin spans 15 to 181; sequence LVSCFGLVQS…GTTGTSTTPA (167 aa). Positions 213-328 constitute a DOMON domain; the sequence is GCYFVAVQAS…NEYYLMIAAG (116 aa). N-linked (GlcNAc...) asparagine glycans are attached at residues N286 and N300. The Cytochrome b561 domain occupies 332–532; that stretch reads QGNIQFHTNK…YILQDLNLRA (201 aa). Residues 369–389 traverse the membrane as a helical segment; that stretch reads AHGCLMLISWMATGSIGMIIA. Residues H370 and H411 each coordinate heme b. 2 helical membrane-spanning segments follow: residues 414–434 and 441–461; these read LMTL…VSAG and HPVL…VAAF. The heme b site is built by H441 and H477. A run of 3 helical transmembrane segments spans residues 479 to 499, 506 to 526, and 550 to 570; these read CNAF…LALF, GWML…YILQ, and ILLF…LVGI.

It belongs to the FRRS1 family. Requires heme b as cofactor.

The protein localises to the membrane. Functionally, putative ferric-chelate reductases reduce Fe(3+) to Fe(2+) before its transport from the endosome to the cytoplasm. The chain is Putative ferric-chelate reductase 1 (frrs1) from Danio rerio (Zebrafish).